Reading from the N-terminus, the 546-residue chain is MSWKAIAKAAQAEVLDAIPTKWKLDPAKYRTLTDVTSVPRECGILSDAQLSITDLTALEVVKRIESRELTAVQALEAFGARTAIAHQLVNCLMDWFYEDGLRQAEELDKSFKATGKLKGPLHGVPVALKDFHFVAGRPTTTGYVSRRDFRPEHDSALVKTLRDAGAVFYCKTTMPQSGMAIETVSNLWGRTLNPYNTALSAGGSSGGDAVLVALKGTPITPSTDLGGSIRVPAAFNGLYAIRPTSDRIPKGGMDNINSGQISIKLSCGPICHSMEDLESFTKLINAYPENQNDPTSVPVPWKTVKPIEGKLTIGLMKWDKVVMPHPPVIRALEHTKRTLEKAGHEVVEFDVPFDCWDAIQTTFDTYYQSGHSGTLSTLEATGEPLIPAFEDLIKVFGSKEISAAESQQLNVKARIFREKFRDAWDATTKLTSTGRPVDALICPTAPAVGYPHDFNVYWGYTSLFNLLDYPSVILPVANFKVNPQDDPVASNYKPLETNPYDKPNHELYKPELFSSQPSTIQVVGRPFQDEELIKVSSVMDDLLRAM.

Active-site charge relay system residues include K129 and S204. The Acyl-ester intermediate role is filled by S228.

The protein belongs to the amidase family.

The protein operates within mycotoxin biosynthesis. Its function is as follows. Amidase; part of the gene cluster that mediates the biosynthesis of butenolide, a mycotoxin that shows antibiotic activity but does not seem to play a major role in the spread of head blight in wheat. Butenolide is derived from glutamic acid via a 4-acetamido-2-butenoic acid intermediate. The predicted function of the NADH:flavin oxidoreductase FG08077, the cytochrome P450 monooxygenase FG08079, the decarboxylase FG08083, and the putative acetyltransferase FG08082 are consistent with this pathway, however, the respective activities of the butelonide biosynthesis cluster enzymes have still to be experimentally determined. This is Amidase FG08078 from Gibberella zeae (strain ATCC MYA-4620 / CBS 123657 / FGSC 9075 / NRRL 31084 / PH-1) (Wheat head blight fungus).